The primary structure comprises 310 residues: D-alanine--D-alanine ligase (310 aa).

Positions 107 to 302 (KQAFQAARLT…FEDLVERILA (196 aa)) constitute an ATP-grasp domain. 135-188 (EFSLPVVVKPSQEGSSVGVSIVKKESEFAAAMKEAFRYDREILVEQFIKGSEVQ) serves as a coordination point for ATP. The Mg(2+) site is built by Asp-256, Glu-269, and Asn-271.

It belongs to the D-alanine--D-alanine ligase family. Requires Mg(2+) as cofactor. Mn(2+) is required as a cofactor.

The protein resides in the cytoplasm. It carries out the reaction 2 D-alanine + ATP = D-alanyl-D-alanine + ADP + phosphate + H(+). It functions in the pathway cell wall biogenesis; peptidoglycan biosynthesis. Cell wall formation. The polypeptide is D-alanine--D-alanine ligase (Geotalea uraniireducens (strain Rf4) (Geobacter uraniireducens)).